Reading from the N-terminus, the 501-residue chain is Cytochrome P450 2J4 (501 aa).

2 consecutive transmembrane segments (helical) span residues 12–32 (IWAALHLRTLLVAALTFLLLA) and 77–97 (NIFSLNLGDITSVVITGLPLI). Heme is bound at residue Cys447.

It belongs to the cytochrome P450 family. The cofactor is heme. In terms of tissue distribution, expressed in small intestinal enterocytes (at protein level). In the intestinal crypt, expressed at higher levels in the mature villous cells than in undifferentiated crypt cells (at protein level). Expressed in liver, kidney, lung, and olfactory mucosa (at protein level).

It localises to the endoplasmic reticulum membrane. Its subcellular location is the microsome membrane. The catalysed reaction is an organic molecule + reduced [NADPH--hemoprotein reductase] + O2 = an alcohol + oxidized [NADPH--hemoprotein reductase] + H2O + H(+). The enzyme catalyses (5Z,8Z,11Z,14Z)-eicosatetraenoate + reduced [NADPH--hemoprotein reductase] + O2 = 19-hydroxy-(5Z,8Z,11Z,14Z)-eicosatetraenoate + oxidized [NADPH--hemoprotein reductase] + H2O + H(+). It catalyses the reaction all-trans-retinal + reduced [NADPH--hemoprotein reductase] + O2 = all-trans-retinoate + oxidized [NADPH--hemoprotein reductase] + H2O + 2 H(+). It carries out the reaction 9-cis-retinal + reduced [NADPH--hemoprotein reductase] + O2 = 9-cis-retinoate + oxidized [NADPH--hemoprotein reductase] + H2O + 2 H(+). Its pathway is lipid metabolism; arachidonate metabolism. It functions in the pathway cofactor metabolism; retinol metabolism. In terms of biological role, a cytochrome P450 monooxygenase that may play a major role in intestinal retinoid metabolism. Catalyzes the oxidative transformation of all-trans retinal and 9-cis-retinal to the corresponding active forms all-trans and 9-cis retinoic acids. Catalyzes the hydroxylation of carbon-hydrogen bonds. Hydroxylates arachidonic acid predominantly at the omega-1 position. Mechanistically, uses molecular oxygen inserting one oxygen atom into a substrate, and reducing the second into a water molecule, with two electrons provided by NADPH via cytochrome P450 reductase (CPR; NADPH--hemoprotein reductase). This chain is Cytochrome P450 2J4, found in Rattus norvegicus (Rat).